The chain runs to 331 residues: UDP-GalNAc:beta-1,3-N-acetylgalactosaminyltransferase 1 (331 aa).

The Cytoplasmic segment spans residues 1-20; it reads MAPAVLTAIPNRMSLRSLKW. Residues 21–43 form a helical; Signal-anchor for type II membrane protein membrane-spanning segment; that stretch reads SLLLLSLLSFLVIWYLSLPHYNV. Residues 44-331 lie on the Lumenal side of the membrane; sequence IERVNWMYFY…VMLRNTTCHY (288 aa). N-linked (GlcNAc...) asparagine glycosylation is found at Asn72, Asn154, Asn198, Asn212, and Asn326.

The protein belongs to the glycosyltransferase 31 family. The cofactor is Mg(2+).

The protein localises to the golgi apparatus membrane. The catalysed reaction is a globoside Gb3Cer (d18:1(4E)) + UDP-N-acetyl-alpha-D-galactosamine = a globoside Gb4Cer (d18:1(4E)) + UDP + H(+). The protein operates within protein modification; protein glycosylation. In terms of biological role, transfers N-acetylgalactosamine onto globotriaosylceramide. Plays a critical role in preimplantation stage embryonic development. In Rattus norvegicus (Rat), this protein is UDP-GalNAc:beta-1,3-N-acetylgalactosaminyltransferase 1 (B3galnt1).